A 567-amino-acid polypeptide reads, in one-letter code: Urease subunit alpha (567 aa).

Residues 129–567 (GGIDTHIHWI…LPMAQRYFLF (439 aa)) form the Urease domain. Ni(2+)-binding residues include His-134, His-136, and Lys-217. At Lys-217 the chain carries N6-carboxylysine. His-219 is a substrate binding site. Residues His-246 and His-272 each contribute to the Ni(2+) site. The Proton donor role is filled by His-320. Asp-360 contacts Ni(2+).

The protein belongs to the metallo-dependent hydrolases superfamily. Urease alpha subunit family. As to quaternary structure, heterotrimer of UreA (gamma), UreB (beta) and UreC (alpha) subunits. Three heterotrimers associate to form the active enzyme. The apoenzyme interacts with an accessory complex composed of UreD, UreF and UreG, which is required for the assembly of the nickel containing metallocenter of UreC. The UreE protein may also play a direct role as a metallochaperone in nickel transfer to the urease apoprotein. Ni cation is required as a cofactor. Post-translationally, carboxylation allows a single lysine to coordinate two nickel ions.

Its subcellular location is the cytoplasm. It catalyses the reaction urea + 2 H2O + H(+) = hydrogencarbonate + 2 NH4(+). It functions in the pathway nitrogen metabolism; urea degradation; CO(2) and NH(3) from urea (urease route): step 1/1. The apoenzyme can be activated in vitro in the presence of nickel ions and carbon dioxide, which promotes carboxylation of Lys-217. This Klebsiella aerogenes (Enterobacter aerogenes) protein is Urease subunit alpha.